The following is a 253-amino-acid chain: Ubiquinone biosynthesis O-methyltransferase (253 aa).

Residues R41, G72, D93, and M136 each coordinate S-adenosyl-L-methionine.

Belongs to the methyltransferase superfamily. UbiG/COQ3 family.

The catalysed reaction is a 3-demethylubiquinol + S-adenosyl-L-methionine = a ubiquinol + S-adenosyl-L-homocysteine + H(+). It carries out the reaction a 3-(all-trans-polyprenyl)benzene-1,2-diol + S-adenosyl-L-methionine = a 2-methoxy-6-(all-trans-polyprenyl)phenol + S-adenosyl-L-homocysteine + H(+). It participates in cofactor biosynthesis; ubiquinone biosynthesis. Its function is as follows. O-methyltransferase that catalyzes the 2 O-methylation steps in the ubiquinone biosynthetic pathway. The sequence is that of Ubiquinone biosynthesis O-methyltransferase from Chelativorans sp. (strain BNC1).